We begin with the raw amino-acid sequence, 184 residues long: Putative manganese efflux pump MntP (184 aa).

The next 5 helical transmembrane spans lie at 39 to 59, 65 to 85, 102 to 122, 132 to 152, and 161 to 181; these read IFGVFQALMPFLGYILGLSFV, IDHFIAFGILGFLGAKMILEA, LALGAVATSIDALAVGITFSF, LIIGTVCFVLCTAACYVGKIL, and LVLGGLILIGLGTKILITHLV.

Belongs to the MntP (TC 9.B.29) family.

The protein localises to the cell inner membrane. Probably functions as a manganese efflux pump. This is Putative manganese efflux pump MntP from Campylobacter curvus (strain 525.92).